The chain runs to 329 residues: Beta-tectorin (329 aa).

Positions 1–17 are cleaved as a signal peptide; sequence MVVRAFVLLALFAEASA. The region spanning 19 to 283 is the ZP domain; it reads SCTPNKADVI…LSCPVNCDKR (265 aa). 4 N-linked (GlcNAc...) asparagine glycosylation sites follow: N80, N104, N116, and N145. A disulfide bridge links C204 with C264. A305 carries GPI-anchor amidated alanine lipidation. Positions 306–329 are cleaved as a propeptide — removed in mature form; the sequence is FSGLCDFSDVLLHLILMLGTWAVL.

In terms of assembly, may form homomeric filament after self-association or heteromeric filament after association with alpha-tectorin. Interacts with CEACAM16. In terms of processing, the presence of a hydrophobic C-terminus preceded by a potential cleavage site strongly suggests that tectorins are synthesized as glycosylphosphatidylinositol-linked, membrane-bound precursors. Tectorins are targeted to the apical surface of the inner ear epithelia by the lipid and proteolytically released into the extracellular compartment.

It localises to the cell membrane. Its subcellular location is the secreted. It is found in the extracellular space. The protein localises to the extracellular matrix. In terms of biological role, one of the major non-collagenous components of the tectorial membrane. The tectorial membrane is an extracellular matrix of the inner ear that covers the neuroepithelium of the cochlea and contacts the stereocilia bundles of specialized sensory hair cells. Sound induces movement of these hair cells relative to the tectorial membrane, deflects the stereocilia and leads to fluctuations in hair-cell membrane potential, transducing sound into electrical signals. The chain is Beta-tectorin (Tectb) from Mus musculus (Mouse).